Consider the following 198-residue polypeptide: ATP-dependent Clp protease proteolytic subunit 1 (198 aa).

The active-site Nucleophile is Ser96. His121 is a catalytic residue.

This sequence belongs to the peptidase S14 family. Fourteen ClpP subunits assemble into 2 heptameric rings which stack back to back to give a disk-like structure with a central cavity, resembling the structure of eukaryotic proteasomes.

The protein resides in the cytoplasm. The catalysed reaction is Hydrolysis of proteins to small peptides in the presence of ATP and magnesium. alpha-casein is the usual test substrate. In the absence of ATP, only oligopeptides shorter than five residues are hydrolyzed (such as succinyl-Leu-Tyr-|-NHMec, and Leu-Tyr-Leu-|-Tyr-Trp, in which cleavage of the -Tyr-|-Leu- and -Tyr-|-Trp bonds also occurs).. Functionally, cleaves peptides in various proteins in a process that requires ATP hydrolysis. Has a chymotrypsin-like activity. Plays a major role in the degradation of misfolded proteins. The chain is ATP-dependent Clp protease proteolytic subunit 1 from Synechocystis sp. (strain ATCC 27184 / PCC 6803 / Kazusa).